The chain runs to 271 residues: NH(3)-dependent NAD(+) synthetase (271 aa).

43 to 50 (GISGGQDS) is an ATP binding site. Residue Asp49 coordinates Mg(2+). Position 136 (Arg136) interacts with deamido-NAD(+). Residue Thr156 participates in ATP binding. Glu161 provides a ligand contact to Mg(2+). 2 residues coordinate deamido-NAD(+): Lys169 and Asp176. ATP-binding residues include Lys185 and Thr207. 256–257 (HK) is a deamido-NAD(+) binding site.

It belongs to the NAD synthetase family. Homodimer.

It carries out the reaction deamido-NAD(+) + NH4(+) + ATP = AMP + diphosphate + NAD(+) + H(+). The protein operates within cofactor biosynthesis; NAD(+) biosynthesis; NAD(+) from deamido-NAD(+) (ammonia route): step 1/1. Functionally, catalyzes the ATP-dependent amidation of deamido-NAD to form NAD. Uses ammonia as a nitrogen source. The sequence is that of NH(3)-dependent NAD(+) synthetase from Tropheryma whipplei (strain TW08/27) (Whipple's bacillus).